Here is a 415-residue protein sequence, read N- to C-terminus: Serine hydroxymethyltransferase (415 aa).

Residues L118 and 122–124 (GHL) each bind (6S)-5,6,7,8-tetrahydrofolate. N6-(pyridoxal phosphate)lysine is present on K227.

Belongs to the SHMT family. In terms of assembly, homodimer. Pyridoxal 5'-phosphate is required as a cofactor.

The protein resides in the cytoplasm. It catalyses the reaction (6R)-5,10-methylene-5,6,7,8-tetrahydrofolate + glycine + H2O = (6S)-5,6,7,8-tetrahydrofolate + L-serine. Its pathway is one-carbon metabolism; tetrahydrofolate interconversion. It functions in the pathway amino-acid biosynthesis; glycine biosynthesis; glycine from L-serine: step 1/1. In terms of biological role, catalyzes the reversible interconversion of serine and glycine with tetrahydrofolate (THF) serving as the one-carbon carrier. This reaction serves as the major source of one-carbon groups required for the biosynthesis of purines, thymidylate, methionine, and other important biomolecules. Also exhibits THF-independent aldolase activity toward beta-hydroxyamino acids, producing glycine and aldehydes, via a retro-aldol mechanism. The protein is Serine hydroxymethyltransferase of Elusimicrobium minutum (strain Pei191).